The primary structure comprises 474 residues: Citrate synthase, mitochondrial (474 aa).

Residues 1–35 constitute a mitochondrion transit peptide; that stretch reads MASTLRLSTSALRSSTLAGKPVVQSVAFNGLRCYS. Catalysis depends on residues H310, H356, and D411.

It belongs to the citrate synthase family.

It is found in the mitochondrion matrix. The catalysed reaction is oxaloacetate + acetyl-CoA + H2O = citrate + CoA + H(+). It participates in carbohydrate metabolism; tricarboxylic acid cycle; isocitrate from oxaloacetate: step 1/2. The sequence is that of Citrate synthase, mitochondrial (citA) from Emericella nidulans (strain FGSC A4 / ATCC 38163 / CBS 112.46 / NRRL 194 / M139) (Aspergillus nidulans).